The chain runs to 301 residues: GTPase Era (301 aa).

Residues lysine 8–glutamate 174 enclose the Era-type G domain. The interval glycine 16–serine 23 is G1. Glycine 16–serine 23 provides a ligand contact to GTP. The G2 stretch occupies residues glutamine 42–asparagine 46. The tract at residues aspartate 63–glycine 66 is G3. GTP is bound by residues aspartate 63–isoleucine 67 and asparagine 124–aspartate 127. Positions asparagine 124–aspartate 127 are G4. Positions isoleucine 153–alanine 155 are G5. The KH type-2 domain occupies isoleucine 197 to arginine 282.

The protein belongs to the TRAFAC class TrmE-Era-EngA-EngB-Septin-like GTPase superfamily. Era GTPase family. As to quaternary structure, monomer.

Its subcellular location is the cytoplasm. The protein localises to the cell membrane. In terms of biological role, an essential GTPase that binds both GDP and GTP, with rapid nucleotide exchange. Plays a role in 16S rRNA processing and 30S ribosomal subunit biogenesis and possibly also in cell cycle regulation and energy metabolism. The polypeptide is GTPase Era (Lactobacillus delbrueckii subsp. bulgaricus (strain ATCC 11842 / DSM 20081 / BCRC 10696 / JCM 1002 / NBRC 13953 / NCIMB 11778 / NCTC 12712 / WDCM 00102 / Lb 14)).